The following is a 171-amino-acid chain: Protein BTG1 (171 aa).

Ser-159 bears the Phosphoserine mark.

Belongs to the BTG family. As to quaternary structure, interacts with CNOT7 and CNOT8.

Its function is as follows. Anti-proliferative protein. In Bos taurus (Bovine), this protein is Protein BTG1 (BTG1).